Here is a 255-residue protein sequence, read N- to C-terminus: uncharacterized protein (255 aa).

An HTH deoR-type domain is found at proline 3–serine 58. A DNA-binding region (H-T-H motif) is located at residues valine 20 to aspartate 39.

This is an uncharacterized protein from Escherichia coli (strain K12).